Here is a 228-residue protein sequence, read N- to C-terminus: Heptaprenylglyceryl phosphate synthase (228 aa).

Residue Lys12 participates in sn-glycerol 1-phosphate binding. Positions 14 and 40 each coordinate Mg(2+). Sn-glycerol 1-phosphate contacts are provided by residues 159–164 (YLEYSG), Gly189, and 209–210 (GN).

This sequence belongs to the GGGP/HepGP synthase family. Group I subfamily. Homodimer. Mg(2+) serves as cofactor.

It catalyses the reaction sn-glycerol 1-phosphate + all-trans-heptaprenyl diphosphate = 3-heptaprenyl-sn-glycero-1-phosphate + diphosphate. It participates in membrane lipid metabolism; glycerophospholipid metabolism. In terms of biological role, prenyltransferase that catalyzes in vivo the transfer of the heptaprenyl moiety of heptaprenyl pyrophosphate (HepPP; 35 carbon atoms) to the C3 hydroxyl of sn-glycerol-1-phosphate (G1P), producing heptaprenylglyceryl phosphate (HepGP). This reaction is an ether-bond-formation step in the biosynthesis of archaea-type G1P-based membrane lipids found in Bacillales. The polypeptide is Heptaprenylglyceryl phosphate synthase (Geobacillus sp. (strain WCH70)).